The primary structure comprises 203 residues: Peptide deformylase (203 aa).

Fe cation is bound by residues cysteine 121 and histidine 163. Glutamate 164 is an active-site residue. Histidine 167 provides a ligand contact to Fe cation.

It belongs to the polypeptide deformylase family. Fe(2+) serves as cofactor.

It catalyses the reaction N-terminal N-formyl-L-methionyl-[peptide] + H2O = N-terminal L-methionyl-[peptide] + formate. Removes the formyl group from the N-terminal Met of newly synthesized proteins. Requires at least a dipeptide for an efficient rate of reaction. N-terminal L-methionine is a prerequisite for activity but the enzyme has broad specificity at other positions. The polypeptide is Peptide deformylase (Prochlorococcus marinus (strain MIT 9515)).